The sequence spans 180 residues: D-lyxose ketol-isomerase (180 aa).

K62 serves as a coordination point for D-fructose. Residues H75 and H77 each contribute to the Mn(2+) site. Residue K86 coordinates D-fructose. 2 residues coordinate Mn(2+): E88 and H143. D-fructose contacts are provided by E156, D166, and R175.

It belongs to the D-lyxose ketol-isomerase family. Homodimer; disulfide-linked. Stabilized by a disulfide bond between the two monomers of the dimeric enzyme and increased hydrophobicity at the dimer interface. Mn(2+) is required as a cofactor.

The catalysed reaction is D-lyxose = D-xylulose. Functionally, sugar isomerase that catalyzes the reversible isomerization of D-lyxose to D-xylulose. Is highly specific for the substrate D-lyxose, showing less than 2% activity towards mannose and other substrates reported for lyxose isomerases. The protein is D-lyxose ketol-isomerase of Thermofilum sp. (strain ex4484_79).